Here is a 484-residue protein sequence, read N- to C-terminus: Glutamate--tRNA ligase (484 aa).

The 'HIGH' region signature appears at 11–21 (PSPTGYLHIGN). The 'KMSKS' region signature appears at 252-256 (KLSKR). An ATP-binding site is contributed by K255.

The protein belongs to the class-I aminoacyl-tRNA synthetase family. Glutamate--tRNA ligase type 1 subfamily. In terms of assembly, monomer.

Its subcellular location is the cytoplasm. The enzyme catalyses tRNA(Glu) + L-glutamate + ATP = L-glutamyl-tRNA(Glu) + AMP + diphosphate. Catalyzes the attachment of glutamate to tRNA(Glu) in a two-step reaction: glutamate is first activated by ATP to form Glu-AMP and then transferred to the acceptor end of tRNA(Glu). The protein is Glutamate--tRNA ligase of Staphylococcus aureus (strain COL).